The primary structure comprises 161 residues: Transcription initiation factor TFIID subunit 12 (161 aa).

Residues 15–55 (FSSIKPEPASTPPQGSMANSTAVVKIPGTPGAGGRLSPENN) are disordered. Lys19 is covalently cross-linked (Glycyl lysine isopeptide (Lys-Gly) (interchain with G-Cter in SUMO2)). Residues 26–36 (PPQGSMANSTA) show a composition bias toward polar residues. Position 43 is a phosphothreonine (Thr43). Position 51 is a phosphoserine (Ser51). Thr59 carries the phosphothreonine modification. Positions 59 to 126 (TKKKLQDLVR…QLHLERQWNM (68 aa)) constitute a Histone-fold domain.

The protein belongs to the TAF12 family. Component of the TFIID basal transcription factor complex, composed of TATA-box-binding protein TBP, and a number of TBP-associated factors (TAFs), including TAF1, TAF2, TAF3, TAF4, TAF5, TAF6, TAF7, TAF8, TAF9, TAF10, TAF11, TAF12 and TAF13. Component of the TATA-binding protein-free TAF complex (TFTC), the PCAF histone acetylase complex and the STAGA transcription coactivator-HAT complex. Component of the PCAF complex, at least composed of TADA2L/ADA2, TADA3L/ADA3, TAF5L/PAF65-beta, SUPT3H, TAF6L, TAF9, TAF10, TAF12 and TRRAP. Component of the STAGA transcription coactivator-HAT complex, at least composed of SUPT3H, GCN5L2, TAF5L, TAF6L, STAF65-gamma/SUPT7L, TADA3L, TAD1L, TAF10, TAF12, TRRAP and TAF9. Interacts with ATF7 (via the transactivation domain); the interaction is prevented by sumoylation of ATF7. As to quaternary structure, interacts with TBP; the interaction is direct. Interacts with TAF10; the interaction is direct. Interacts with ATF7, promoting transactivation by ATF7. In terms of assembly, does not promote the transactivation of ATF7. Ubiquitous.

The protein resides in the nucleus. Functionally, the TFIID basal transcription factor complex plays a major role in the initiation of RNA polymerase II (Pol II)-dependent transcription. TFIID recognizes and binds promoters with or without a TATA box via its subunit TBP, a TATA-box-binding protein, and promotes assembly of the pre-initiation complex (PIC). The TFIID complex consists of TBP and TBP-associated factors (TAFs), including TAF1, TAF2, TAF3, TAF4, TAF5, TAF6, TAF7, TAF8, TAF9, TAF10, TAF11, TAF12 and TAF13. Component of the TATA-binding protein-free TAF complex (TFTC), the PCAF histone acetylase complex and the STAGA transcription coactivator-HAT complex. This Homo sapiens (Human) protein is Transcription initiation factor TFIID subunit 12.